The following is a 402-amino-acid chain: B3 domain-containing protein LFL1 (402 aa).

The segment at 1 to 174 (MRGEERWQEQ…AAPRPSSHHT (174 aa)) is disordered. Positions 74–87 (ARPPTLAASAAAAS) are enriched in low complexity. Positions 88 to 102 (SPPPPPPPPIPPLPP) are enriched in pro residues. 2 stretches are compositionally biased toward low complexity: residues 103–139 (STSTSAARPTDMAGVTSKRRSSSASTSSSSGDGAAVS) and 156–169 (PRPAASLRPAAPRP). The segment at residues 181 to 284 (LQKELRYSDV…RFVIGAKKAG (104 aa)) is a DNA-binding region (TF-B3). Residues 381 to 402 (LHVTDDKSGHSLIPNPKSGPHM) are disordered.

As to expression, expressed in anthers, pollen grains and young developing embryos.

It is found in the nucleus. In terms of biological role, transcription repressor involved in flowering time regulation. Represses the flowering activator EHD1 by binding specifically to the DNA sequence 5'-CATGCATG-3 of its promoter. This Oryza sativa subsp. japonica (Rice) protein is B3 domain-containing protein LFL1 (LFL1).